The following is a 458-amino-acid chain: Tol-Pal system protein TolB (458 aa).

The signal sequence occupies residues 1 to 23 (MSSVIRKWALTALMAVSSTALFA).

It belongs to the TolB family. The Tol-Pal system is composed of five core proteins: the inner membrane proteins TolA, TolQ and TolR, the periplasmic protein TolB and the outer membrane protein Pal. They form a network linking the inner and outer membranes and the peptidoglycan layer.

Its subcellular location is the periplasm. Functionally, part of the Tol-Pal system, which plays a role in outer membrane invagination during cell division and is important for maintaining outer membrane integrity. The polypeptide is Tol-Pal system protein TolB (Zymomonas mobilis subsp. mobilis (strain ATCC 31821 / ZM4 / CP4)).